A 235-amino-acid polypeptide reads, in one-letter code: 2-C-methyl-D-erythritol 4-phosphate cytidylyltransferase (235 aa).

This sequence belongs to the IspD/TarI cytidylyltransferase family. IspD subfamily. As to quaternary structure, homodimer.

The catalysed reaction is 2-C-methyl-D-erythritol 4-phosphate + CTP + H(+) = 4-CDP-2-C-methyl-D-erythritol + diphosphate. The protein operates within isoprenoid biosynthesis; isopentenyl diphosphate biosynthesis via DXP pathway; isopentenyl diphosphate from 1-deoxy-D-xylulose 5-phosphate: step 2/6. In terms of biological role, catalyzes the formation of 4-diphosphocytidyl-2-C-methyl-D-erythritol from CTP and 2-C-methyl-D-erythritol 4-phosphate (MEP). The chain is 2-C-methyl-D-erythritol 4-phosphate cytidylyltransferase from Blochmanniella pennsylvanica (strain BPEN).